A 168-amino-acid chain; its full sequence is ATP synthase subunit b (168 aa).

A helical transmembrane segment spans residues 9-29 (SIPFGTIAYTLFIFLLLLVML).

It belongs to the ATPase B chain family. As to quaternary structure, F-type ATPases have 2 components, F(1) - the catalytic core - and F(0) - the membrane proton channel. F(1) has five subunits: alpha(3), beta(3), gamma(1), delta(1), epsilon(1). F(0) has three main subunits: a(1), b(2) and c(10-14). The alpha and beta chains form an alternating ring which encloses part of the gamma chain. F(1) is attached to F(0) by a central stalk formed by the gamma and epsilon chains, while a peripheral stalk is formed by the delta and b chains.

It is found in the cell membrane. Functionally, f(1)F(0) ATP synthase produces ATP from ADP in the presence of a proton or sodium gradient. F-type ATPases consist of two structural domains, F(1) containing the extramembraneous catalytic core and F(0) containing the membrane proton channel, linked together by a central stalk and a peripheral stalk. During catalysis, ATP synthesis in the catalytic domain of F(1) is coupled via a rotary mechanism of the central stalk subunits to proton translocation. Component of the F(0) channel, it forms part of the peripheral stalk, linking F(1) to F(0). The chain is ATP synthase subunit b from Bacillus mycoides (strain KBAB4) (Bacillus weihenstephanensis).